The chain runs to 308 residues: tRNA pseudouridine synthase B (308 aa).

Asp46 acts as the Nucleophile in catalysis.

Belongs to the pseudouridine synthase TruB family. Type 1 subfamily.

It carries out the reaction uridine(55) in tRNA = pseudouridine(55) in tRNA. Responsible for synthesis of pseudouridine from uracil-55 in the psi GC loop of transfer RNAs. The sequence is that of tRNA pseudouridine synthase B from Marinomonas sp. (strain MWYL1).